The following is a 156-amino-acid chain: Small ribosomal subunit protein uS7 (156 aa).

The protein belongs to the universal ribosomal protein uS7 family. In terms of assembly, part of the 30S ribosomal subunit. Contacts proteins S9 and S11.

Its function is as follows. One of the primary rRNA binding proteins, it binds directly to 16S rRNA where it nucleates assembly of the head domain of the 30S subunit. Is located at the subunit interface close to the decoding center, probably blocks exit of the E-site tRNA. The polypeptide is Small ribosomal subunit protein uS7 (Synechococcus sp. (strain CC9902)).